Reading from the N-terminus, the 186-residue chain is Prorelaxin 1 (186 aa).

Positions 1–22 are cleaved as a signal peptide; the sequence is MSSRLLLQLLGFWLFLSQPCRA. Disulfide bonds link cysteine 36–cysteine 173, cysteine 48–cysteine 186, and cysteine 172–cysteine 177. A propeptide spans 58-158 (connecting peptide); that stretch reads SQEEPAPLAR…LKYLGSDAQS (101 aa). Position 163 is a pyrrolidone carboxylic acid (glutamine 163).

Belongs to the insulin family. In terms of assembly, heterodimer of a B chain and an A chain linked by two disulfide bonds.

The protein resides in the secreted. Relaxin is an ovarian hormone that acts with estrogen to produce dilatation of the birth canal in many mammals. This is Prorelaxin 1 (Rln1) from Rattus norvegicus (Rat).